The sequence spans 318 residues: UDP-3-O-acylglucosamine N-acyltransferase (318 aa).

Histidine 230 functions as the Proton acceptor in the catalytic mechanism.

Belongs to the transferase hexapeptide repeat family. LpxD subfamily. Homotrimer.

The enzyme catalyses a UDP-3-O-[(3R)-3-hydroxyacyl]-alpha-D-glucosamine + a (3R)-hydroxyacyl-[ACP] = a UDP-2-N,3-O-bis[(3R)-3-hydroxyacyl]-alpha-D-glucosamine + holo-[ACP] + H(+). Its pathway is bacterial outer membrane biogenesis; LPS lipid A biosynthesis. Its function is as follows. Catalyzes the N-acylation of UDP-3-O-acylglucosamine using 3-hydroxyacyl-ACP as the acyl donor. Is involved in the biosynthesis of lipid A, a phosphorylated glycolipid that anchors the lipopolysaccharide to the outer membrane of the cell. The sequence is that of UDP-3-O-acylglucosamine N-acyltransferase from Wolinella succinogenes (strain ATCC 29543 / DSM 1740 / CCUG 13145 / JCM 31913 / LMG 7466 / NCTC 11488 / FDC 602W) (Vibrio succinogenes).